The sequence spans 638 residues: NBPF family member NBPF6 (638 aa).

Coiled-coil stretches lie at residues 10–43 (SERA…EKFL) and 69–115 (DSVL…KLRE). Residues 157–285 (HLVHKLSPEN…VPPRHHDKSN (129 aa)) form a disordered region. Acidic residues predominate over residues 165–179 (ENDEDEDEDEDDKDE). An Olduvai 1 domain is found at 174–261 (EDDKDEEVEK…EEEEALNIPP (88 aa)). Residues 192 to 202 (EVQKTEEKEVP) show a composition bias toward basic and acidic residues. A compositionally biased stretch (low complexity) spans 214–226 (SNSHNPSNSNQPH). 2 stretches are compositionally biased toward basic and acidic residues: residues 232 to 251 (TFKE…HPHD) and 264 to 273 (QNDHEEEEGK). Olduvai domains follow at residues 326 to 399 (EKQS…ALVD) and 400 to 503 (KIKK…SQAQ). The segment at 563-584 (MKNPPQLEDDALEGSASNTQGR) is disordered.

This sequence belongs to the NBPF family.

The protein resides in the cytoplasm. The chain is NBPF family member NBPF6 from Homo sapiens (Human).